The chain runs to 432 residues: Anaerobic glycerol-3-phosphate dehydrogenase subunit B (432 aa).

This sequence belongs to the anaerobic G-3-P dehydrogenase subunit B family. As to quaternary structure, composed of a catalytic GlpA/B dimer and of membrane bound GlpC. Requires FMN as cofactor.

The catalysed reaction is a quinone + sn-glycerol 3-phosphate = dihydroxyacetone phosphate + a quinol. The protein operates within polyol metabolism; glycerol degradation via glycerol kinase pathway; glycerone phosphate from sn-glycerol 3-phosphate (anaerobic route): step 1/1. Functionally, conversion of glycerol 3-phosphate to dihydroxyacetone. Uses fumarate or nitrate as electron acceptor. This is Anaerobic glycerol-3-phosphate dehydrogenase subunit B from Haemophilus influenzae (strain 86-028NP).